The primary structure comprises 214 residues: Imidazole glycerol phosphate synthase subunit HisH 2 (214 aa).

The region spanning Lys2 to Gly210 is the Glutamine amidotransferase type-1 domain. Cys82 acts as the Nucleophile in catalysis. Catalysis depends on residues His185 and Glu187.

In terms of assembly, heterodimer of HisH and HisF.

The protein localises to the cytoplasm. The catalysed reaction is 5-[(5-phospho-1-deoxy-D-ribulos-1-ylimino)methylamino]-1-(5-phospho-beta-D-ribosyl)imidazole-4-carboxamide + L-glutamine = D-erythro-1-(imidazol-4-yl)glycerol 3-phosphate + 5-amino-1-(5-phospho-beta-D-ribosyl)imidazole-4-carboxamide + L-glutamate + H(+). It catalyses the reaction L-glutamine + H2O = L-glutamate + NH4(+). The protein operates within amino-acid biosynthesis; L-histidine biosynthesis; L-histidine from 5-phospho-alpha-D-ribose 1-diphosphate: step 5/9. Its function is as follows. IGPS catalyzes the conversion of PRFAR and glutamine to IGP, AICAR and glutamate. The HisH subunit provides the glutamine amidotransferase activity that produces the ammonia necessary to HisF for the synthesis of IGP and AICAR. The polypeptide is Imidazole glycerol phosphate synthase subunit HisH 2 (hisH2) (Vibrio vulnificus (strain YJ016)).